The primary structure comprises 347 residues: GMP reductase (347 aa).

Position 108-131 (108-131) interacts with NADP(+); that stretch reads ADFDKMKQILALSPALKFICIDVA. Positions 181 and 183 each coordinate K(+). C186 (thioimidate intermediate) is an active-site residue. An NADP(+)-binding site is contributed by 216–239; the sequence is IVSDGGCSVPGDVAKAFGGGADFV.

Belongs to the IMPDH/GMPR family. GuaC type 1 subfamily. In terms of assembly, homotetramer.

It catalyses the reaction IMP + NH4(+) + NADP(+) = GMP + NADPH + 2 H(+). Catalyzes the irreversible NADPH-dependent deamination of GMP to IMP. It functions in the conversion of nucleobase, nucleoside and nucleotide derivatives of G to A nucleotides, and in maintaining the intracellular balance of A and G nucleotides. The protein is GMP reductase of Yersinia enterocolitica serotype O:8 / biotype 1B (strain NCTC 13174 / 8081).